Here is a 474-residue protein sequence, read N- to C-terminus: mRNA cap guanine-N(7) methyltransferase (474 aa).

Residues 1-12 show a composition bias toward polar residues; sequence MSTDSYTPSQEP. Residues 1–106 form a disordered region; sequence MSTDSYTPSQ…GHEGDEGDED (106 aa). Positions 56–100 are enriched in basic and acidic residues; the sequence is SDIDGKYDKYGERRNAHTTTRDSRLDRLKRVRQKSAEREDVGHEG. The mRNA cap 0 methyltransferase domain maps to 170–474; sequence SPIYKMRNFN…FYIGFVFEKV (305 aa). 179 to 180 is a binding site for mRNA; the sequence is NN. S-adenosyl-L-methionine contacts are provided by Lys183, Cys207, Asp229, Asp269, Gln299, and Tyr304.

Belongs to the class I-like SAM-binding methyltransferase superfamily. mRNA cap 0 methyltransferase family.

The protein localises to the nucleus. The enzyme catalyses a 5'-end (5'-triphosphoguanosine)-ribonucleoside in mRNA + S-adenosyl-L-methionine = a 5'-end (N(7)-methyl 5'-triphosphoguanosine)-ribonucleoside in mRNA + S-adenosyl-L-homocysteine. Functionally, responsible for methylating the 5'-cap structure of mRNAs. This chain is mRNA cap guanine-N(7) methyltransferase (ABD1), found in Candida albicans (strain SC5314 / ATCC MYA-2876) (Yeast).